A 105-amino-acid polypeptide reads, in one-letter code: U2-lycotoxin-Ls1d (105 aa).

Residues 1–17 (MIKYVLISALLVVAVYS) form the signal peptide. Residues 18–41 (FTIEDNEDALLEEAEDELDTEEER) constitute a propeptide that is removed on maturation. Cystine bridges form between cysteine 51-cysteine 67, cysteine 58-cysteine 97, cysteine 60-cysteine 83, and cysteine 69-cysteine 81.

Belongs to the neurotoxin 04 (omega-agtx) family. 01 (type I omega-agtx) subfamily. As to expression, expressed by the venom gland.

The protein localises to the secreted. Insecticidal to house crickets. It induces an excitatory slow-onset impact that leads to irreversible spastic paralysis. It also modifies human voltage-gated potassium channel Kv1.5/KCNA5. Most likely, it binds to the voltage-sensing domain of the channel, suggesting it does not block the pore but prevents its opening at physiological membrane potentials. The recombinant peptide binds to the channel in an irreversible manner and slows down the hKv1.5 current activation kinetics. It is not toxic to mice, when intracranially injected (at 0.5 ug/g mouse). The sequence is that of U2-lycotoxin-Ls1d from Lycosa singoriensis (Wolf spider).